We begin with the raw amino-acid sequence, 340 residues long: Protein RecA (340 aa).

65–72 (GPESGGKT) contacts ATP.

It belongs to the RecA family.

The protein resides in the cytoplasm. Its function is as follows. Can catalyze the hydrolysis of ATP in the presence of single-stranded DNA, the ATP-dependent uptake of single-stranded DNA by duplex DNA, and the ATP-dependent hybridization of homologous single-stranded DNAs. It interacts with LexA causing its activation and leading to its autocatalytic cleavage. The polypeptide is Protein RecA (Thermus thermophilus).